A 358-amino-acid polypeptide reads, in one-letter code: tRNA-specific 2-thiouridylase MnmA (358 aa).

Residues 8 to 15 (GLSGGVDS) and Met-34 each bind ATP. The interval 94 to 96 (NPD) is interaction with target base in tRNA. Cys-99 functions as the Nucleophile in the catalytic mechanism. Cys-99 and Cys-196 are oxidised to a cystine. Position 123 (Gly-123) interacts with ATP. The interaction with tRNA stretch occupies residues 146–148 (KDQ). Catalysis depends on Cys-196, which acts as the Cysteine persulfide intermediate. The tract at residues 308-309 (RY) is interaction with tRNA.

Belongs to the MnmA/TRMU family.

It localises to the cytoplasm. The catalysed reaction is S-sulfanyl-L-cysteinyl-[protein] + uridine(34) in tRNA + AH2 + ATP = 2-thiouridine(34) in tRNA + L-cysteinyl-[protein] + A + AMP + diphosphate + H(+). In terms of biological role, catalyzes the 2-thiolation of uridine at the wobble position (U34) of tRNA, leading to the formation of s(2)U34. The chain is tRNA-specific 2-thiouridylase MnmA from Thiobacillus denitrificans (strain ATCC 25259 / T1).